The following is a 177-amino-acid chain: Alkyl hydroperoxide reductase AhpD (177 aa).

The Proton donor role is filled by Cys130. Residues Cys130 and Cys133 are joined by a disulfide bond. Residue Cys133 is the Cysteine sulfenic acid (-SOH) intermediate of the active site.

It belongs to the AhpD family. Homotrimer.

The catalysed reaction is N(6)-[(R)-dihydrolipoyl]-L-lysyl-[lipoyl-carrier protein] + a hydroperoxide = N(6)-[(R)-lipoyl]-L-lysyl-[lipoyl-carrier protein] + an alcohol + H2O. Functionally, antioxidant protein with alkyl hydroperoxidase activity. Required for the reduction of the AhpC active site cysteine residues and for the regeneration of the AhpC enzyme activity. In Corynebacterium aurimucosum (strain ATCC 700975 / DSM 44827 / CIP 107346 / CN-1) (Corynebacterium nigricans), this protein is Alkyl hydroperoxide reductase AhpD.